We begin with the raw amino-acid sequence, 245 residues long: Demethylmenaquinone methyltransferase (245 aa).

Residues Thr-69, Asp-90, and 118–119 (DC) contribute to the S-adenosyl-L-methionine site.

The protein belongs to the class I-like SAM-binding methyltransferase superfamily. MenG/UbiE family.

The catalysed reaction is a 2-demethylmenaquinol + S-adenosyl-L-methionine = a menaquinol + S-adenosyl-L-homocysteine + H(+). It participates in quinol/quinone metabolism; menaquinone biosynthesis; menaquinol from 1,4-dihydroxy-2-naphthoate: step 2/2. Functionally, methyltransferase required for the conversion of demethylmenaquinol (DMKH2) to menaquinol (MKH2). In Porphyromonas gingivalis (strain ATCC 33277 / DSM 20709 / CIP 103683 / JCM 12257 / NCTC 11834 / 2561), this protein is Demethylmenaquinone methyltransferase.